Here is a 537-residue protein sequence, read N- to C-terminus: Probable sterol O-acyltransferase 1 (537 aa).

The next 4 helical transmembrane spans lie at 98–118, 140–160, 174–194, and 199–219; these read FRGF…QLYA, FFVL…SYGL, LGYT…VYWV, and FPIV…MKQF. Residue asparagine 250 is glycosylated (N-linked (GlcNAc...) asparagine). The next 2 membrane-spanning stretches (helical) occupy residues 344 to 364 and 384 to 404; these read FGLL…SAVA and IMFP…DCIL. The short motif at 418–424 is the FYXDWWN motif element; sequence FYGAWWN. Helical transmembrane passes span 462–482 and 517–537; these read AVLL…LLAT and VFFW…YIVF. Residue histidine 474 is part of the active site.

It belongs to the membrane-bound acyltransferase family. Sterol o-acyltransferase subfamily.

The protein resides in the endoplasmic reticulum membrane. Sterol O-acyltransferase that catalyzes the formation of stery esters. The sequence is that of Probable sterol O-acyltransferase 1 (are1) from Schizosaccharomyces pombe (strain 972 / ATCC 24843) (Fission yeast).